Reading from the N-terminus, the 227-residue chain is Pre-hexon-linking protein VIII (227 aa).

The residue at position 64 (threonine 64) is a Phosphothreonine; by host. Residues 112 to 157 (FRHRVRSPGQGITHLTIRGRGIQLNDESVSSSLGLRPDGTFQIGGA) constitute a propeptide that is removed on maturation. Phosphoserine; by host occurs at positions 118 and 174.

This sequence belongs to the adenoviridae hexon-linking protein family. Interacts with the peripentonal hexons as well as the hexons in the facets. Part of a complex composed of the core-capsid bridging protein, the endosome lysis protein VI and the hexon-linking protein VIII; these interactions bridge the virus core to the capsid. Post-translationally, cleaved by the viral protease during virion maturation. May cause the middle segment to be shed from the capsid.

The protein resides in the virion. Its subcellular location is the host nucleus. Functionally, structural component of the virion that acts as a cement protein on the capsid interior and which glue the peripentonal hexons and group-of-nine hexons together. The chain is Pre-hexon-linking protein VIII from Human adenovirus C serotype 5 (HAdV-5).